The sequence spans 280 residues: 3-methyl-2-oxobutanoate hydroxymethyltransferase (280 aa).

2 residues coordinate Mg(2+): Asp-49 and Asp-88. Residues 49-50 (DS), Asp-88, and Lys-118 each bind 3-methyl-2-oxobutanoate. Glu-120 contacts Mg(2+). Glu-186 (proton acceptor) is an active-site residue.

This sequence belongs to the PanB family. As to quaternary structure, homodecamer; pentamer of dimers. Mg(2+) serves as cofactor.

It is found in the cytoplasm. It carries out the reaction 3-methyl-2-oxobutanoate + (6R)-5,10-methylene-5,6,7,8-tetrahydrofolate + H2O = 2-dehydropantoate + (6S)-5,6,7,8-tetrahydrofolate. It participates in cofactor biosynthesis; (R)-pantothenate biosynthesis; (R)-pantoate from 3-methyl-2-oxobutanoate: step 1/2. Its function is as follows. Catalyzes the reversible reaction in which hydroxymethyl group from 5,10-methylenetetrahydrofolate is transferred onto alpha-ketoisovalerate to form ketopantoate. This chain is 3-methyl-2-oxobutanoate hydroxymethyltransferase, found in Ruegeria sp. (strain TM1040) (Silicibacter sp.).